Reading from the N-terminus, the 576-residue chain is MIVLGWAVFLASRSLGQGLLLTLEEHIAHFLGTRGATTTMGNSCICRDDSGTDDSVDTQQQQAENSAVPTADTRSQPRDPVRPPRRGRGPHEPRRKKQNVDGLVLDTLAVIRTLVDNDQEPPYSMITLHEMAETDEGWLDVVQSLIRVIPLEDPLGPAVITLLLDECPLPTKDALQKLTEILNLNGEVACQDSGHPAKHRNTSAVLGCLAEKLAGPASIGLLSPGILEYLLQCLKLQSHPTVMLFALIALEKFAQTSENKLTISESSISDRLVTLESWANDPDYLKRQVGFCAQWSLDNLFLKEGRQLTYEKVNLSSIRAMLNSNDVSEYLKISPHGLEARCDASSFESVRCTFCVDAGVWYYEVTVVTSGVMQIGWATRDSKFLNHEGYGIGDDEYSCAYDGCRQLIWYNARSKPHIHPCWKEGDTVGFLLDLNEKQMIFFLNGNQLPPEKQVFSSTISGFFAAASFMSYQQCEFNFGAKPFKYPPSMKFSTFNDYAFLTAEEKIILPRHRRLALLKQVSIRENCCSLCCDEVADTQLKPCGHSDLCMDCALQLETCPLCRKEIVSRIRQISHIS.

An N-terminal signal peptide occupies residues 1-16; it reads MIVLGWAVFLASRSLG. At serine 50 the chain carries Phosphoserine. A disordered region spans residues 50–99; sequence SGTDDSVDTQQQQAENSAVPTADTRSQPRDPVRPPRRGRGPHEPRRKKQN. Residues 57 to 68 are compositionally biased toward polar residues; it reads DTQQQQAENSAV. The segment covering 83–97 has biased composition (basic residues); the sequence is PPRRGRGPHEPRRKK. The 184-residue stretch at 300-483 folds into the B30.2/SPRY domain; the sequence is LFLKEGRQLT…CEFNFGAKPF (184 aa). N-linked (GlcNAc...) asparagine glycosylation is present at asparagine 314. An RING-type zinc finger spans residues 527–562; it reads CSLCCDEVADTQLKPCGHSDLCMDCALQLETCPLCR.

The protein resides in the secreted. The chain is RING finger and SPRY domain-containing protein 1 (RSPRY1) from Macaca fascicularis (Crab-eating macaque).